Consider the following 98-residue polypeptide: MAHKKGTGSTRNGRDSNAQRLGVKRYGGQVVRAGNILVRQRGTKFHPGNNVGIGSDDTLFALIDGVVMFERKGKTRKKVSVYLPLTAVETAPAEAVAS.

A disordered region spans residues 1-22; that stretch reads MAHKKGTGSTRNGRDSNAQRLG. Residues 7 to 19 show a composition bias toward polar residues; that stretch reads TGSTRNGRDSNAQ.

It belongs to the bacterial ribosomal protein bL27 family.

This Nostoc punctiforme (strain ATCC 29133 / PCC 73102) protein is Large ribosomal subunit protein bL27.